The following is a 266-amino-acid chain: Endoplasmic reticulum vesicle protein 25 (266 aa).

A signal peptide spans 1 to 26 (MGSSPQSSTRTLLGLLFLLLVQLSSA). Topologically, residues 27-188 (LKFDLHASSG…TNESTNERVK (162 aa)) are lumenal. The region spanning 39 to 129 (ERCIRNFVFK…YKSVELDVEI (91 aa)) is the GOLD domain. The chain crosses the membrane as a helical span at residues 189-209 (WFAFGTMGMLVGLGVWQVVYL). Topologically, residues 210–266 (RAYFRYVDFPVSWRVDGVVANCCSCCEQVEASYLRSSRVVFWSPLVMWTRLSWLILR) are cytoplasmic.

The protein belongs to the EMP24/GP25L family.

It is found in the endoplasmic reticulum membrane. The protein resides in the golgi apparatus membrane. Its function is as follows. Constituent of COPII-coated endoplasmic reticulum-derived transport vesicles. Required for efficient transport of a subset of secretory proteins to the Golgi. Facilitates retrograde transport from the Golgi to the endoplasmic reticulum. This Aspergillus fumigatus (strain ATCC MYA-4609 / CBS 101355 / FGSC A1100 / Af293) (Neosartorya fumigata) protein is Endoplasmic reticulum vesicle protein 25 (erv25).